A 657-amino-acid polypeptide reads, in one-letter code: N-acetylgalactosaminyltransferase 7 (657 aa).

The Cytoplasmic segment spans residues 1 to 6; the sequence is MRLKIG. Residues 7–29 form a helical; Signal-anchor for type II membrane protein membrane-spanning segment; it reads FILRSLLVVGSFLGLVVLWSSLT. The Lumenal segment spans residues 30–657; the sequence is PRPDDPSPLS…KWEMNNIHSV (628 aa). Residues 31–65 form a disordered region; the sequence is RPDDPSPLSRMREDRDVNDPMPNRGGNGLAPGEDR. 5 disulfides stabilise this stretch: cysteine 197/cysteine 435, cysteine 426/cysteine 507, cysteine 545/cysteine 562, cysteine 585/cysteine 600, and cysteine 625/cysteine 640. Residues 206-317 form a catalytic subdomain A region; the sequence is LLTSSVVIVF…VNWYAPLVAP (112 aa). Residues aspartate 247 and arginine 277 each contribute to the substrate site. The Mn(2+) site is built by aspartate 301 and histidine 303. Residues 381–443 are catalytic subdomain B; the sequence is PYRSPAMAGG…PCSRVGHIYR (63 aa). Residue tryptophan 412 participates in substrate binding. Histidine 440 contributes to the Mn(2+) binding site. Arginine 443 serves as a coordination point for substrate. In terms of domain architecture, Ricin B-type lectin spans 532–652; the sequence is VDWGEIRGFE…SKTTQKWEMN (121 aa).

Belongs to the glycosyltransferase 2 family. GalNAc-T subfamily. The cofactor is Mn(2+). As to expression, widely expressed. Expressed in uterus, retina, kidney, small intestine, omentum, stomach and CNS.

The protein resides in the golgi apparatus membrane. The enzyme catalyses L-seryl-[protein] + UDP-N-acetyl-alpha-D-galactosamine = a 3-O-[N-acetyl-alpha-D-galactosaminyl]-L-seryl-[protein] + UDP + H(+). The catalysed reaction is L-threonyl-[protein] + UDP-N-acetyl-alpha-D-galactosamine = a 3-O-[N-acetyl-alpha-D-galactosaminyl]-L-threonyl-[protein] + UDP + H(+). It participates in protein modification; protein glycosylation. Its function is as follows. Glycopeptide transferase involved in O-linked oligosaccharide biosynthesis, which catalyzes the transfer of an N-acetyl-D-galactosamine residue to an already glycosylated peptide. In contrast to other proteins of the family, it does not act as a peptide transferase that transfers GalNAc onto serine or threonine residue on the protein receptor, but instead requires the prior addition of a GalNAc on a peptide before adding additional GalNAc moieties. Some peptide transferase activity is however not excluded, considering that its appropriate peptide substrate may remain unidentified. The sequence is that of N-acetylgalactosaminyltransferase 7 (GALNT7) from Homo sapiens (Human).